A 271-amino-acid polypeptide reads, in one-letter code: DNA repair protein RecO (271 aa).

Over residues 249-264 (VRVEDSVRQDGDRDST) the composition is skewed to basic and acidic residues. The disordered stretch occupies residues 249–271 (VRVEDSVRQDGDRDSTTRTSSPA).

It belongs to the RecO family.

Involved in DNA repair and RecF pathway recombination. In Rhodococcus jostii (strain RHA1), this protein is DNA repair protein RecO.